The following is a 408-amino-acid chain: MLVTLKTLQQQTFKIDIDPDETVRALKEKIESEKGKDAFPVAGQKLIYAGKILNDDTALKEYKIDEKNFVVVMVTKPKAVTTPAPATTQQSNSAATTTVSSSTAPAVTQAPAPAPASAPTPTPVSVTPAPTTASSEPAPASAAKQEKPAERPVETPVATTPTSTDSTSGDSSRSNLFEDATSALVTGQSYENMVTEIMSMGYEREQVIAALRASFNNPDRAVEYLLMGIPGDRESQAVVDPPPAASTGAPQSSVAAAAATTTATTTTTSSGGHPLEFLRNQPQFQQMRQIIQQNPSLLPALLQQIGRENPQLLQQISQHQEHFIQMLNEPVQEAGGQGGGGGGGSGGIAEAGGGHMNYIQVTPQEKEAIERLKALGFPEGLVIQAYFACEKNENLAANFLLQQNFDED.

Residues 1-79 (MLVTLKTLQQ…VVVMVTKPKA (79 aa)) form the Ubiquitin-like domain. A compositionally biased stretch (low complexity) spans 80–111 (VTTPAPATTQQSNSAATTTVSSSTAPAVTQAP). Positions 80 to 176 (VTTPAPATTQ…TSGDSSRSNL (97 aa)) are disordered. Over residues 112–122 (APAPASAPTPT) the composition is skewed to pro residues. Residues 123–143 (PVSVTPAPTTASSEPAPASAA) show a composition bias toward low complexity. A compositionally biased stretch (basic and acidic residues) spans 144 to 153 (KQEKPAERPV). The span at 154–174 (ETPVATTPTSTDSTSGDSSRS) shows a compositional bias: low complexity. Phosphothreonine is present on residues T155 and T164. The residue at position 174 (S174) is a Phosphoserine. T186 carries the phosphothreonine modification. The UBA 1 domain maps to 188 to 228 (QSYENMVTEIMSMGYEREQVIAALRASFNNPDRAVEYLLMG). S199 bears the Phosphoserine mark. Position 202 is a phosphotyrosine (Y202). Residues 236–274 (QAVVDPPPAASTGAPQSSVAAAAATTTATTTTTSSGGHP) form a disordered region. Residues 255–268 (AAAAATTTATTTTT) show a composition bias toward low complexity. Residues 273–316 (HPLEFLRNQPQFQQMRQIIQQNPSLLPALLQQIGRENPQLLQQI) form the STI1 domain. Positions 363-403 (PQEKEAIERLKALGFPEGLVIQAYFACEKNENLAANFLLQQ) constitute a UBA 2 domain.

The protein belongs to the RAD23 family. Component of the XPC complex composed of XPC, RAD23B and CETN2. Interacts with NGLY1 and PSMC1. Interacts with ATXN3. Interacts with PSMD4 and PSMC5. Interacts with AMFR. Interacts with VCP; the interaction is indirect and mediated by NGLY1.

Its subcellular location is the nucleus. It localises to the cytoplasm. Its function is as follows. Multiubiquitin chain receptor involved in modulation of proteasomal degradation. Binds to polyubiquitin chains. Proposed to be capable to bind simultaneously to the 26S proteasome and to polyubiquitinated substrates and to deliver ubiquitinated proteins to the proteasome. May play a role in endoplasmic reticulum-associated degradation (ERAD) of misfolded glycoproteins by association with PNGase and delivering deglycosylated proteins to the proteasome. In terms of biological role, involved in global genome nucleotide excision repair (GG-NER) by acting as component of the XPC complex. Cooperatively with CETN2 appears to stabilize XPC. May protect XPC from proteasomal degradation. The XPC complex is proposed to represent the first factor bound at the sites of DNA damage and together with other core recognition factors, XPA, RPA and the TFIIH complex, is part of the pre-incision (or initial recognition) complex. The XPC complex recognizes a wide spectrum of damaged DNA characterized by distortions of the DNA helix such as single-stranded loops, mismatched bubbles or single-stranded overhangs. The orientation of XPC complex binding appears to be crucial for inducing a productive NER. XPC complex is proposed to recognize and to interact with unpaired bases on the undamaged DNA strand which is followed by recruitment of the TFIIH complex and subsequent scanning for lesions in the opposite strand in a 5'-to-3' direction by the NER machinery. Cyclobutane pyrimidine dimers (CPDs) which are formed upon UV-induced DNA damage esacpe detection by the XPC complex due to a low degree of structural perurbation. Instead they are detected by the UV-DDB complex which in turn recruits and cooperates with the XPC complex in the respective DNA repair. In vitro, the XPC:RAD23B dimer is sufficient to initiate NER; it preferentially binds to cisplatin and UV-damaged double-stranded DNA and also binds to a variety of chemically and structurally diverse DNA adducts. XPC:RAD23B contacts DNA both 5' and 3' of a cisplatin lesion with a preference for the 5' side. XPC:RAD23B induces a bend in DNA upon binding. XPC:RAD23B stimulates the activity of DNA glycosylases TDG and SMUG1. The chain is UV excision repair protein RAD23 homolog B (RAD23B) from Bos taurus (Bovine).